Here is a 295-residue protein sequence, read N- to C-terminus: Lectin 11 (295 aa).

The Cytoplasmic portion of the chain corresponds to 1 to 22 (MHYSHFYFIINNTNMTINAIPK). The helical transmembrane segment at 23–45 (LFATKNSISLSIVIFMYLLILVA) threads the bilayer. Residues 46-295 (NVKSDSSFNF…ILSWSFTSNM (250 aa)) are Extracellular-facing. An N-linked (GlcNAc...) asparagine glycan is attached at Asn152.

Belongs to the leguminous lectin family.

The protein localises to the membrane. Functionally, may be involved in arbuscular mycorrhizal (AM) symbiosis with AM fungi. The sequence is that of Lectin 11 from Medicago truncatula (Barrel medic).